The sequence spans 483 residues: MEKWWLNSMLSNEDLGRRCGLSASLGPIGNTSGSEEPITNDNEKNIHSWSGRGSYSYSNVDYLLGLDGVKDIWSLISGDTFWVRDSNGDSYSVYFDIENKIFEIDTDSYFLGELESLFSSYLNLNSGSKDYNRYYDQYVYDTRHSWKNHINSCIDSYIRSETNMDSCISNGSNNSSDNYIYSYICSDSERGSDRGSSNLKTSVSDFGRHSDLDRNLKYGHLWVQCENCYGLNYKKFFSSKMNICEQCGYHLKMSSSDRIELLIDPGTWDPMDENMVSIDPIEFHSEEEPYRDRINSYQIETGLAEAVQTGIGKLNGIPIAIGVMDFKFMGGSMGSVVGEKITRLIEYATDRSLPVIMVCASGGARMQEGSLSLMQMAKISSALYNYQSNKKLFYVSILTSPTTGGVTASFGMLGDIIIAEPNAYIAFAGKRVIEQTLKKTVPEGSQVAEYSFHKGLFDPIVPRNLLKGVPSELFQFHGFFPRP.

One can recognise a CoA carboxyltransferase N-terminal domain in the interval 221–483; that stretch reads LWVQCENCYG…FQFHGFFPRP (263 aa). Zn(2+) contacts are provided by Cys-225, Cys-228, Cys-244, and Cys-247. The C4-type zinc finger occupies 225–247; sequence CENCYGLNYKKFFSSKMNICEQC.

This sequence belongs to the AccD/PCCB family. In terms of assembly, acetyl-CoA carboxylase is a heterohexamer composed of biotin carboxyl carrier protein, biotin carboxylase and 2 subunits each of ACCase subunit alpha and ACCase plastid-coded subunit beta (accD). It depends on Zn(2+) as a cofactor.

It is found in the plastid. The protein localises to the chloroplast stroma. It carries out the reaction N(6)-carboxybiotinyl-L-lysyl-[protein] + acetyl-CoA = N(6)-biotinyl-L-lysyl-[protein] + malonyl-CoA. It participates in lipid metabolism; malonyl-CoA biosynthesis; malonyl-CoA from acetyl-CoA: step 1/1. Component of the acetyl coenzyme A carboxylase (ACC) complex. Biotin carboxylase (BC) catalyzes the carboxylation of biotin on its carrier protein (BCCP) and then the CO(2) group is transferred by the transcarboxylase to acetyl-CoA to form malonyl-CoA. In Nuphar advena (Common spatterdock), this protein is Acetyl-coenzyme A carboxylase carboxyl transferase subunit beta, chloroplastic.